The primary structure comprises 513 residues: Flagellin A (513 aa).

It belongs to the bacterial flagellin family. As to quaternary structure, heteromer of FlaA and FlaB. FlaB is located proximal to the hook while the remainder of the filament is composed of the predominant FlaA.

The protein localises to the secreted. The protein resides in the bacterial flagellum. In terms of biological role, flagellin is the subunit protein which polymerizes to form the filaments of bacterial flagella. Important for motility and virulence. This chain is Flagellin A (flaA), found in Helicobacter felis (strain ATCC 49179 / CCUG 28539 / NCTC 12436 / CS1).